The following is a 498-amino-acid chain: Probable deoxyguanosinetriphosphate triphosphohydrolase (498 aa).

One can recognise an HD domain in the interval 71–262 (RLTHSLEVQQ…MEAADDISYC (192 aa)).

It belongs to the dGTPase family. Type 1 subfamily. Mg(2+) is required as a cofactor.

The catalysed reaction is dGTP + H2O = 2'-deoxyguanosine + triphosphate + H(+). In terms of biological role, dGTPase preferentially hydrolyzes dGTP over the other canonical NTPs. This is Probable deoxyguanosinetriphosphate triphosphohydrolase from Pseudomonas aeruginosa (strain ATCC 15692 / DSM 22644 / CIP 104116 / JCM 14847 / LMG 12228 / 1C / PRS 101 / PAO1).